The sequence spans 180 residues: tRNA (cytidine(56)-2'-O)-methyltransferase (180 aa).

Residues Leu-83, Gly-115–Val-119, and Val-133–Glu-140 contribute to the S-adenosyl-L-methionine site.

Belongs to the aTrm56 family. Homodimer.

The protein localises to the cytoplasm. It catalyses the reaction cytidine(56) in tRNA + S-adenosyl-L-methionine = 2'-O-methylcytidine(56) in tRNA + S-adenosyl-L-homocysteine + H(+). Specifically catalyzes the AdoMet-dependent 2'-O-ribose methylation of cytidine at position 56 in tRNAs. The polypeptide is tRNA (cytidine(56)-2'-O)-methyltransferase (Methanococcus aeolicus (strain ATCC BAA-1280 / DSM 17508 / OCM 812 / Nankai-3)).